Reading from the N-terminus, the 262-residue chain is Apolipoprotein A-I (262 aa).

A signal peptide spans 1–18 (MKFLALALTILLAAATQA). The interval 32–63 (VKVAMMEYMAQVKETGQRSIDLLDDTEFKEYK) is 3 X approximate tandem repeats. 2 consecutive repeat copies span residues 64 to 85 (VQLS…QSLA) and 87 to 107 (YSEA…AEVM). Residues 64–262 (VQLSQSLDNL…YETISQAMKA (199 aa)) are 10 X approximate tandem repeats. One copy of the 3; half-length repeat lies at 108–118 (KDVEDVRTQLE). Repeat copies occupy residues 119–140 (PKRA…KKLE), 141–162 (PLIK…VKME), 163–184 (PVVE…AKLM), 185–206 (PIVE…TLAA), and 207–228 (PYAE…EKVG). The stretch at 229 to 239 (PLTNDFKGQVG) is one 9; half-length repeat. The stretch at 240–262 (PAAEQAKEKLMDFYETISQAMKA) is repeat 10.

Belongs to the apolipoprotein A1/A4/E family.

The protein localises to the secreted. In terms of biological role, participates in the reverse transport of cholesterol from tissues to the liver for excretion by promoting cholesterol efflux from tissues and by acting as a cofactor for the lecithin cholesterol acyltransferase (LCAT). The chain is Apolipoprotein A-I (apoa1) from Salmo trutta (Brown trout).